The chain runs to 488 residues: Serine protease HTR4 (488 aa).

Positions 1-35 (MSRSKMSSQRLWAVRAQFLLLWLLLWAAPVPWAEA) are cleaved as a signal peptide. One can recognise an IGFBP N-terminal domain in the interval 40–118 (VSLPCPDACD…RAWLGTCGCA (79 aa)). 6 disulfide bridges follow: C44/C70, C48/C72, C53/C73, C59/C76, C84/C98, and C92/C115. Residues 213 to 373 (GSGFIVSEDG…IPSDRIRQFL (161 aa)) form a serine protease region. Catalysis depends on charge relay system residues H229, D259, and S337. The PDZ domain occupies 384–476 (KAPLQKKYLG…LSIIVLRGSQ (93 aa)).

The protein belongs to the peptidase S1C family.

It is found in the secreted. Functionally, serine protease. This chain is Serine protease HTR4 (Htra4), found in Rattus norvegicus (Rat).